Consider the following 156-residue polypeptide: Cellulose synthase operon protein D (156 aa).

It participates in glycan metabolism; bacterial cellulose biosynthesis. May have a major role in the perfection of crystallization, involved either in the pore structure itself or in the organization of the pores within the linear array of terminal synthesizing complexes (TCs). This is Cellulose synthase operon protein D from Komagataeibacter xylinus (Gluconacetobacter xylinus).